Here is a 375-residue protein sequence, read N- to C-terminus: Geranylgeranyl transferase type-1 subunit beta (375 aa).

The tract at residues 1-33 (MSETAVSIDSDRSKSEEEDEEEYSPPVQSSPSA) is disordered. The residue at position 2 (serine 2) is an N-acetylserine. 4 PFTB repeats span residues 157 to 199 (SKSL…YMLD), 206 to 247 (KESA…RLMG), 265 to 306 (PSLL…KLIG), and 313 to 354 (KMAL…SLLE). Geranylgeranyl diphosphate contacts are provided by residues 232–234 (HGG) and 285–288 (RTNK). Zn(2+)-binding residues include aspartate 291 and cysteine 293. Residue 294–297 (YAFW) coordinates geranylgeranyl diphosphate. Histidine 342 contributes to the Zn(2+) binding site.

This sequence belongs to the protein prenyltransferase subunit beta family. In terms of assembly, heterodimer of an alpha and a beta subunit. Zn(2+) is required as a cofactor. Requires Mg(2+) as cofactor. Expressed in roots, leaves, stems, flowers and siliques.

The enzyme catalyses geranylgeranyl diphosphate + L-cysteinyl-[protein] = S-geranylgeranyl-L-cysteinyl-[protein] + diphosphate. In terms of biological role, catalyzes the transfer of a geranyl-geranyl moiety from geranyl-geranyl pyrophosphate to a cysteine at the fourth position from the C-terminus of proteins having the C-terminal sequence Cys-aliphatic-aliphatic-X (CaaX). Seems to exclusively prenylate CaaX substrates with leucine in the terminal position. The beta subunit is responsible for peptide-binding. May negatively regulate abscisic acid (ABA) signaling in guard cells and auxin-induced lateral root initiation. Functionally, negatively regulates ABA signaling in guard cells. in negative regulation of auxin-induced lateral root initiation. This chain is Geranylgeranyl transferase type-1 subunit beta (GGB), found in Arabidopsis thaliana (Mouse-ear cress).